Consider the following 333-residue polypeptide: DNA-directed RNA polymerase subunit alpha (333 aa).

The alpha N-terminal domain (alpha-NTD) stretch occupies residues 1–234; it reads MQISVNEFLT…QQLAAFVDLK (234 aa). Residues 248 to 333 form an alpha C-terminal domain (alpha-CTD) region; it reads IDPILLRPVD…SLKKDDKATA (86 aa).

This sequence belongs to the RNA polymerase alpha chain family. As to quaternary structure, homodimer. The RNAP catalytic core consists of 2 alpha, 1 beta, 1 beta' and 1 omega subunit. When a sigma factor is associated with the core the holoenzyme is formed, which can initiate transcription.

It carries out the reaction RNA(n) + a ribonucleoside 5'-triphosphate = RNA(n+1) + diphosphate. In terms of biological role, DNA-dependent RNA polymerase catalyzes the transcription of DNA into RNA using the four ribonucleoside triphosphates as substrates. The protein is DNA-directed RNA polymerase subunit alpha of Pseudomonas entomophila (strain L48).